The primary structure comprises 531 residues: Zinc finger protein 692 (531 aa).

The segment covering 155-178 has biased composition (basic and acidic residues); that stretch reads EAQGLECEQRERTQETRLSRRVDS. Disordered regions lie at residues 155 to 249 and 287 to 307; these read EAQG…PATL and MTESLESPGSQAQSAPNPTWD. The segment covering 186–206 has biased composition (acidic residues); the sequence is LGEDQDVEEEEEEEEEEEELL. At S231 the chain carries Phosphoserine. Residues 290–303 show a composition bias toward polar residues; that stretch reads SLESPGSQAQSAPN. 5 consecutive C2H2-type zinc fingers follow at residues 327–352, 358–382, 388–410, 416–438, and 447–470; these read MPCDFPGCGRIFSNRQYLNHHKKYQH, FCCPEPACGKSFNFKKHLKEHVKLH, YICEFCARSFRTSSNLVIHRRIH, LQCEICGFTCRQKASLNWHRRKH, and FPCEFCGKRFEKPDSVVAHCSKSH. S469 carries the post-translational modification Phosphoserine. The segment at 474-531 is disordered; sequence LPAQEPPGSLVSSPSISAPESLQSPEGASISTTSDSNPASSTSISSPGVPDPRNREKS. Residues 483-499 are compositionally biased toward polar residues; it reads LVSSPSISAPESLQSPE. Low complexity predominate over residues 502–520; it reads SISTTSDSNPASSTSISSP.

Belongs to the krueppel C2H2-type zinc-finger protein family. Phosphorylation at Ser-469 results in loss of DNA-binding activity.

It is found in the nucleus. In terms of biological role, may act as an transcriptional repressor for PCK1 gene expression, in turn may participate in the hepatic gluconeogenesis regulation through the activated AMPK signaling pathway. The polypeptide is Zinc finger protein 692 (Mus musculus (Mouse)).